A 147-amino-acid chain; its full sequence is Endoribonuclease YbeY (147 aa).

The Zn(2+) site is built by His111, His115, and Asp121.

It belongs to the endoribonuclease YbeY family. Zn(2+) is required as a cofactor.

It localises to the cytoplasm. Functionally, single strand-specific metallo-endoribonuclease involved in late-stage 70S ribosome quality control and in maturation of the 3' terminus of the 16S rRNA. This chain is Endoribonuclease YbeY, found in Amoebophilus asiaticus (strain 5a2).